Here is a 217-residue protein sequence, read N- to C-terminus: Tegument protein BKRF4 (217 aa).

Residues 1 to 217 (MAMFLKSRGV…GNNNYNWPWL (217 aa)) are disordered. Over residues 32–42 (YTLGSQASQSI) the composition is skewed to polar residues. The segment covering 43–79 (QEEDVSDTDESDYSDEDEEIDLEEEYPSDEDPSEGSD) has biased composition (acidic residues). The tract at residues 63-64 (DL) is interaction with host histones H3/H4. An interaction with host H2A/H2B region spans residues 81-84 (DPSW). The span at 89–102 (SDESDYSESDEDEA) shows a compositional bias: acidic residues. Positions 106-132 (SQASRSSRVSPSTQQSSGLTPTPSFSR) are enriched in low complexity. A compositionally biased stretch (pro residues) spans 136–145 (RAPPRPPAPA). Residues 208–217 (GNNNYNWPWL) show a composition bias toward polar residues.

It belongs to the lymphocryptovirus BKRF4 family. Forms a complex with the host H3/H4 dimer and histone chaperone ASF1. Also forms a complex with host H2A/H2B dimer. Interacts (via C-terminus) with BGLF2; this interaction is important for infectious virion production.

The protein resides in the virion tegument. Its subcellular location is the host nucleus. It localises to the host cytoplasm. The protein localises to the host perinuclear region. In terms of biological role, histone-binding protein that binds to histones H2A/H2B, H3/H4 and cellular chromatin to overcome the host DNA damage response triggered by the viral genome ends. Interferes with histone ubiquitination and recruitment of repair proteins. The protein is Tegument protein BKRF4 of Epstein-Barr virus (strain AG876) (HHV-4).